Here is a 138-residue protein sequence, read N- to C-terminus: Nucleoside diphosphate kinase (138 aa).

ATP-binding residues include lysine 9, phenylalanine 57, arginine 85, threonine 91, arginine 102, and asparagine 112. Residue histidine 115 is the Pros-phosphohistidine intermediate of the active site.

The protein belongs to the NDK family. In terms of assembly, homotetramer. It depends on Mg(2+) as a cofactor.

It is found in the cytoplasm. It catalyses the reaction a 2'-deoxyribonucleoside 5'-diphosphate + ATP = a 2'-deoxyribonucleoside 5'-triphosphate + ADP. The enzyme catalyses a ribonucleoside 5'-diphosphate + ATP = a ribonucleoside 5'-triphosphate + ADP. Major role in the synthesis of nucleoside triphosphates other than ATP. The ATP gamma phosphate is transferred to the NDP beta phosphate via a ping-pong mechanism, using a phosphorylated active-site intermediate. This chain is Nucleoside diphosphate kinase, found in Trichlorobacter lovleyi (strain ATCC BAA-1151 / DSM 17278 / SZ) (Geobacter lovleyi).